Consider the following 455-residue polypeptide: UDP-glycosyltransferase 2 (455 aa).

It belongs to the UDP-glycosyltransferase family.

It catalyses the reaction exophillate + UDP-alpha-D-galactose = phaeomoniecin D + UDP + H(+). It functions in the pathway secondary metabolite biosynthesis. Catalyzes the second glycosylation step during phaeomoniecin D biosynthesis, the further O-galactosylation of exophillic acid (produced by the O-glycosyltransferase OGT1) to yield the 4-O-beta-D-galactoside phaeomoniecin D. The sequence is that of UDP-glycosyltransferase 2 from Phaeomoniella chlamydospora (Phaeoacremonium chlamydosporum).